We begin with the raw amino-acid sequence, 1064 residues long: Protein NLRC3 (1064 aa).

The 322-residue stretch at 138-459 (RVSLTIGVAG…YCFIHLSLQE (322 aa)) folds into the NACHT domain. An ATP-binding site is contributed by 144–151 (GVAGVGKT). LRR repeat units lie at residues 338-362 (LGHL…LCEL), 570-593 (LSEL…TLAG), 632-662 (LPQL…VLSG), 664-687 (DCRI…ALAR), 692-715 (NRSL…ALAD), 720-743 (NRTL…CVAE), 748-771 (NQTI…QMAD), 776-799 (NRSL…ALAE), 804-827 (NQIL…VLMR), 832-855 (NQTL…ALTQ), 860-883 (NNTL…AIAV), 888-911 (NHSL…ALGQ), 916-939 (NRTL…SVAG), 972-995 (NRTL…ALAN), 1000-1022 (NSSL…IFVA), and 1028-1051 (NHGL…MISE).

Belongs to the NLRP family. In terms of assembly, directly interacts (via CARD) with TMEM173/STING; this interaction reduces TMEM173 trafficking to the perinuclear region in response to interferon stimulatory DNA. Also interacts, but to a lesser extent, with TBK1. Interacts with TRAF6; this interaction results in decreased TRAF6 'Lys-63'-linked polyubiquitination, but leaves 'Lys-48'-linked chains unchanged, promoting TRAF6 protein degradation. Interacts with PIK3R1/PIK3R2; this interaction disrupts the association between PIK3R1/PIK3R2 and the p110 catalytic subunit PIK3CA/PIK3CB/PIK3CD and reduces PIK3R1/PIK3R2 activation. Weakly interacts with PYCARD/ASC. Interacts with CASP1 and CASP5. In terms of tissue distribution, expressed in bone marrow-derived macrophages.

The protein resides in the cytoplasm. Its function is as follows. Negative regulator of the innate immune response. Attenuates signaling pathways activated by Toll-like receptors (TLRs) and the DNA sensor STING/TMEM173 in response to pathogen-associated molecular patterns, such as intracellular poly(dA:dT), but not poly(I:C), or in response to DNA virus infection, including that of Herpes simplex virus 1 (HSV1). May affect TLR4 signaling by acting at the level of TRAF6 ubiquitination, decreasing the activating 'Lys-63'-linked ubiquitination and leaving unchanged the degradative 'Lys-48'-linked ubiquitination. Inhibits the PI3K-AKT-mTOR pathway possibly by directly interacting with the posphatidylinositol 3-kinase regulatory subunit p85 (PIK3R1/PIK3R2) and disrupting the association between PIK3R1/PIK3R2 and the catalytic subunit p110 (PIK3CA/PIK3CB/PIK3CD) and reducing PIK3R1/PIK3R2 activation. Via its regulation of the PI3K-AKT-mTOR pathway, controls cell proliferation, predominantly in intestinal epithelial cells. May also affect NOD1- or NOD2-mediated NF-kappa-B activation. Might also affect the inflammatory response by preventing NLRP3 inflammasome formation, CASP1 cleavage and IL1B maturation. This is Protein NLRC3 (Nlrc3) from Mus musculus (Mouse).